The following is a 225-amino-acid chain: Phosphoribosylformylglycinamidine synthase subunit PurQ (225 aa).

The Glutamine amidotransferase type-1 domain occupies 4-225; that stretch reads RVGVITFPGT…YSVLDSVISA (222 aa). Catalysis depends on cysteine 87, which acts as the Nucleophile. Catalysis depends on residues histidine 196 and glutamate 198.

In terms of assembly, part of the FGAM synthase complex composed of 1 PurL, 1 PurQ and 2 PurS subunits.

It localises to the cytoplasm. It carries out the reaction N(2)-formyl-N(1)-(5-phospho-beta-D-ribosyl)glycinamide + L-glutamine + ATP + H2O = 2-formamido-N(1)-(5-O-phospho-beta-D-ribosyl)acetamidine + L-glutamate + ADP + phosphate + H(+). The catalysed reaction is L-glutamine + H2O = L-glutamate + NH4(+). It functions in the pathway purine metabolism; IMP biosynthesis via de novo pathway; 5-amino-1-(5-phospho-D-ribosyl)imidazole from N(2)-formyl-N(1)-(5-phospho-D-ribosyl)glycinamide: step 1/2. Functionally, part of the phosphoribosylformylglycinamidine synthase complex involved in the purines biosynthetic pathway. Catalyzes the ATP-dependent conversion of formylglycinamide ribonucleotide (FGAR) and glutamine to yield formylglycinamidine ribonucleotide (FGAM) and glutamate. The FGAM synthase complex is composed of three subunits. PurQ produces an ammonia molecule by converting glutamine to glutamate. PurL transfers the ammonia molecule to FGAR to form FGAM in an ATP-dependent manner. PurS interacts with PurQ and PurL and is thought to assist in the transfer of the ammonia molecule from PurQ to PurL. The polypeptide is Phosphoribosylformylglycinamidine synthase subunit PurQ (Rhodococcus jostii (strain RHA1)).